Consider the following 426-residue polypeptide: 3-phosphoshikimate 1-carboxyvinyltransferase (426 aa).

The 3-phosphoshikimate site is built by Lys23, Ser24, and Arg28. A phosphoenolpyruvate-binding site is contributed by Lys23. Positions 96 and 124 each coordinate phosphoenolpyruvate. Residues Thr170, Ser171, Gln172, Ser198, Asp314, and Lys341 each contribute to the 3-phosphoshikimate site. Residue Gln172 coordinates phosphoenolpyruvate. Asp314 functions as the Proton acceptor in the catalytic mechanism. Phosphoenolpyruvate is bound by residues Arg345, Arg386, and Lys411.

This sequence belongs to the EPSP synthase family. As to quaternary structure, monomer.

It is found in the cytoplasm. The enzyme catalyses 3-phosphoshikimate + phosphoenolpyruvate = 5-O-(1-carboxyvinyl)-3-phosphoshikimate + phosphate. It participates in metabolic intermediate biosynthesis; chorismate biosynthesis; chorismate from D-erythrose 4-phosphate and phosphoenolpyruvate: step 6/7. In terms of biological role, catalyzes the transfer of the enolpyruvyl moiety of phosphoenolpyruvate (PEP) to the 5-hydroxyl of shikimate-3-phosphate (S3P) to produce enolpyruvyl shikimate-3-phosphate and inorganic phosphate. The protein is 3-phosphoshikimate 1-carboxyvinyltransferase of Nostoc punctiforme (strain ATCC 29133 / PCC 73102).